A 422-amino-acid polypeptide reads, in one-letter code: Gamma-glutamyl phosphate reductase (422 aa).

The protein belongs to the gamma-glutamyl phosphate reductase family.

The protein localises to the cytoplasm. The enzyme catalyses L-glutamate 5-semialdehyde + phosphate + NADP(+) = L-glutamyl 5-phosphate + NADPH + H(+). The protein operates within amino-acid biosynthesis; L-proline biosynthesis; L-glutamate 5-semialdehyde from L-glutamate: step 2/2. Functionally, catalyzes the NADPH-dependent reduction of L-glutamate 5-phosphate into L-glutamate 5-semialdehyde and phosphate. The product spontaneously undergoes cyclization to form 1-pyrroline-5-carboxylate. The chain is Gamma-glutamyl phosphate reductase from Chloroflexus aurantiacus (strain ATCC 29366 / DSM 635 / J-10-fl).